A 180-amino-acid chain; its full sequence is MMSNTILPRNFYERPTLVVAGELLGKMLKFSNFSGIITEVEAYIGMSDPACHAAKGYTNRTSVMFGMPGFSYVYFIYGMYYCLNIVTEAEGFPAAVLIRGLKLIEPLEANLGGPGILCKRLNITKEHNKQDLTISHEFCVYESHLKPDYVCTPRIGISKGQEKFWRFKNLRSCVDYLPIG.

The protein belongs to the DNA glycosylase MPG family.

In Wolbachia pipientis wMel, this protein is Putative 3-methyladenine DNA glycosylase.